The chain runs to 468 residues: Cell division protein FtsA (468 aa).

The disordered stretch occupies residues 416 to 468 (NKKDTHENEVESSDEEIYQSEDNHQEHKQNHEHVQDKDKEESKFKKLMKSLFE). Positions 425–434 (VESSDEEIYQ) are enriched in acidic residues. The segment covering 436–459 (EDNHQEHKQNHEHVQDKDKEESKF) has biased composition (basic and acidic residues).

This sequence belongs to the FtsA/MreB family. Self-interacts. Interacts with FtsZ.

It localises to the cell membrane. Cell division protein that is involved in the assembly of the Z ring. May serve as a membrane anchor for the Z ring. This chain is Cell division protein FtsA, found in Staphylococcus aureus (strain MRSA252).